A 615-amino-acid polypeptide reads, in one-letter code: DNA mismatch repair protein MutL (615 aa).

Residues 363 to 397 (FAEPAAREPVAPRYSPAPASGSRPAAPWPNAQPGY) form a disordered region. Residues 364–387 (AEPAAREPVAPRYSPAPASGSRPA) show a composition bias toward low complexity.

It belongs to the DNA mismatch repair MutL/HexB family.

In terms of biological role, this protein is involved in the repair of mismatches in DNA. It is required for dam-dependent methyl-directed DNA mismatch repair. May act as a 'molecular matchmaker', a protein that promotes the formation of a stable complex between two or more DNA-binding proteins in an ATP-dependent manner without itself being part of a final effector complex. The sequence is that of DNA mismatch repair protein MutL from Shigella flexneri.